A 1368-amino-acid polypeptide reads, in one-letter code: Kinesin-like protein KIF24 (1368 aa).

The SAM domain occupies 1–64 (MASWLYECLC…FQLIKIIKIM (64 aa)). The tract at residues 89–112 (ELRSGPRRQLNFDSPADNKDRNAS) is disordered. Phosphoserine occurs at positions 102 and 112. The Kinesin motor domain occupies 223 to 546 (KIRVCVRKRP…LRYADRVKEL (324 aa)). An ATP-binding site is contributed by 313–320 (GQTGAGKT). At Ser-478 the chain carries Phosphoserine. The tract at residues 478–709 (SLLALKECIR…STKCKKVQTV (232 aa)) is interaction with MPHOSPH9. Positions 557–576 (TSRNRTSGNSSPKRIQSSPG) are enriched in polar residues. Disordered stretches follow at residues 557–584 (TSRNRTSGNSSPKRIQSSPGALSEDKCS) and 602–639 (GSTRGKVHPLTSHPPNIPFTSAPKVSGKRGGSRGSPSQ). The residue at position 584 (Ser-584) is a Phosphoserine. Thr-621 carries the post-translational modification Phosphothreonine; by NEK2. Ser-622 carries the phosphoserine; by NEK2 modification. Phosphoserine is present on Ser-646. Disordered regions lie at residues 651–670 (TVRSGHVAKKKPEESAPLCS), 729–753 (HRAEYSQDSQRGTPARPASEAWTNI), 792–849 (QYRP…NTLE), 864–938 (GPEK…LAEK), and 952–984 (RGGGSSFDLRKDASQSEVSGENEGNLPSPEEDG). A compositionally biased stretch (acidic residues) spans 819 to 830 (QVEELDDSDFSE). Ser-826 and Ser-829 each carry phosphoserine. Composition is skewed to polar residues over residues 839–849 (QRATKQRNTLE) and 871–881 (ERQQSLFSSPR). Over residues 882–906 (TGDKKDLTKSWVDSRDPINHRRAAL) the composition is skewed to basic and acidic residues. The residue at position 1012 (Ser-1012) is a Phosphoserine. Disordered stretches follow at residues 1054–1073 (MSLLENPDNEGSPPSEQLVQ) and 1086–1148 (GGPV…SREA). The span at 1106 to 1119 (SSATRHLWLSSSPP) shows a compositional bias: polar residues. Residues 1138 to 1148 (HPADKLPSREA) are compositionally biased toward basic and acidic residues.

It belongs to the TRAFAC class myosin-kinesin ATPase superfamily. Kinesin family. As to quaternary structure, interacts with CCP110, CEP97, TALPID3. Interacts with MPHOSPH9.

It localises to the cytoplasm. The protein resides in the cytoskeleton. It is found in the microtubule organizing center. Its subcellular location is the centrosome. The protein localises to the centriole. Functionally, microtubule-dependent motor protein that acts as a negative regulator of ciliogenesis by mediating recruitment of CCP110 to mother centriole in cycling cells, leading to restrict nucleation of cilia at centrioles. Mediates depolymerization of microtubules of centriolar origin, possibly to suppress aberrant cilia formation. Following activation by NEK2 involved in disassembly of primary cilium during G2/M phase but does not disassemble fully formed ciliary axonemes. As cilium assembly and disassembly is proposed to coexist in a dynamic equilibrium may suppress nascent cilium assembly and, potentially, ciliar re-assembly in cells that have already disassembled their cilia ensuring the completion of cilium removal in the later stages of the cell cycle. Plays an important role in recruiting MPHOSPH9, a negative regulator of cilia formation to the distal end of mother centriole. This Homo sapiens (Human) protein is Kinesin-like protein KIF24 (KIF24).